A 1044-amino-acid chain; its full sequence is Sarcoplasmic/endoplasmic reticulum calcium ATPase 2 (1044 aa).

Over 1 to 48 the chain is Cytoplasmic; it reads MENAHTKTVEEVLGHFGVNESTGLSLEQVKKLKERWGSNELPAEEGKT. Ser-38 is modified (phosphoserine). The chain crosses the membrane as a helical span at residues 49–69; sequence LLELVIEQFEDLLVRILLLAA. At 70–89 the chain is on the lumenal side; sequence CISFVLAWFEEGEETITAFV. The chain crosses the membrane as a helical span at residues 90–110; sequence EPFVILLILVANAIVGVWQER. Topologically, residues 111-253 are cytoplasmic; that stretch reads NAENAIEALK…QERTPLQQKL (143 aa). Residues 254-273 form a helical membrane-spanning segment; the sequence is DEFGEQLSKVISLICIAVWI. Residues 274 to 295 are Lumenal-facing; the sequence is INIGHFNDPVHGGSWIRGAIYY. 2 positions are modified to 3'-nitrotyrosine: Tyr-294 and Tyr-295. A helical membrane pass occupies residues 296-313; it reads FKIAVALAVAAIPEGLPA. The Ca(2+) site is built by Val-304, Ala-305, Ile-307, and Glu-309. Over 314–756 the chain is Cytoplasmic; that stretch reads VITTCLALGT…EEGRAIYNNM (443 aa). The active-site 4-aspartylphosphate intermediate is the Asp-351. Mg(2+)-binding residues include Asp-351 and Thr-353. Residue Thr-353 participates in ATP binding. The residue at position 441 (Thr-441) is a Phosphothreonine. The ATP site is built by Glu-442, Arg-489, and Lys-514. Ser-531 carries the phosphoserine modification. Arg-559 lines the ATP pocket. The segment at 575-594 is interaction with HAX1; the sequence is MHLEDSANFIKYETNLTFVG. Ser-580 carries the post-translational modification Phosphoserine. ATP contacts are provided by Thr-624, Gly-625, and Asp-626. 2 positions are modified to phosphoserine: Ser-661 and Ser-663. ATP is bound by residues Arg-677 and Lys-683. Asp-702 provides a ligand contact to Mg(2+). An ATP-binding site is contributed by Asn-705. The helical transmembrane segment at 757 to 776 threads the bilayer; it reads KQFIRYLISSNVGEVVCIFL. 2 residues coordinate Ca(2+): Asn-767 and Glu-770. Over 777–786 the chain is Lumenal; the sequence is TAALGFPEAL. A helical membrane pass occupies residues 787 to 807; sequence IPVQLLWVNLVTDGLPATALG. The segment at 787 to 807 is interaction with PLN; it reads IPVQLLWVNLVTDGLPATALG. The tract at residues 788–1044 is interaction with TMEM64 and PDIA3; sequence PVQLLWVNLV…DTNFSDMFWS (257 aa). Ca(2+)-binding residues include Asn-795, Thr-798, and Asp-799. The Cytoplasmic portion of the chain corresponds to 808 to 827; that stretch reads FNPPDLDIMNKPPRNPKEPL. Residues 828-850 form a helical membrane-spanning segment; sequence ISGWLFFRYLAIGCYVGAATVGA. At 851–896 the chain is on the lumenal side; it reads AAWWFIAADGGPRVSFYQLSHFLQCKEDNPDFDGVDCAIFESPYPM. Cys-875 and Cys-887 are oxidised to a cystine. Residues 897–916 traverse the membrane as a helical segment; sequence TMALSVLVTIEMCNALNSLS. Residue Glu-907 participates in Ca(2+) binding. At 917 to 929 the chain is on the cytoplasmic side; it reads ENQSLLRMPPWEN. The helical transmembrane segment at 930 to 948 threads the bilayer; that stretch reads IWLVGSICLSMSLHFLILY. The interaction with PLN stretch occupies residues 931 to 942; the sequence is WLVGSICLSMSL. The Lumenal portion of the chain corresponds to 949 to 963; the sequence is VEPLPLIFQITPLNL. Residues 964–984 traverse the membrane as a helical segment; the sequence is TQWLMVLKISLPVILMDETLK. Residues 985–1044 are Cytoplasmic-facing; that stretch reads FVARNYLEQPGKECVQPATKSSCSLSACTDGISWPFVLLIMPLVVWVYSTDTNFSDMFWS.

It belongs to the cation transport ATPase (P-type) (TC 3.A.3) family. Type IIA subfamily. Interacts with sarcolipin (SLN); the interaction inhibits ATP2A2 Ca(2+) affinity. Interacts with phospholamban (PLN); the interaction inhibits ATP2A2 Ca(2+) affinity. Interacts with myoregulin (MRLN). Interacts with ARLN and ERLN; the interactions inhibit ATP2A2 Ca(2+) affinity. Interacts with STRIT1/DWORF; the interaction results in activation of ATP2A2. Interacts with the monomeric forms of SLN, PLN, ARLN, ERLN and STRI1/DWORF. Interacts with HAX1. Interacts with S100A8 and S100A9. Interacts with SLC35G1 and STIM1. Interacts with TMEM203. Interacts with TMEM64 and PDIA3. Interacts with TMX1. Interacts with TMX2. Interacts with VMP1; VMP1 competes with PLN and SLN to prevent them from forming an inhibitory complex with ATP2A2. Interacts with ULK1. Interacts with S100A1 in a Ca(2+)-dependent manner. Interacts with TUNAR. Interacts with FLVCR2; this interaction occurs in the absence of heme and promotes ATP2A2 proteasomal degradation; this complex is dissociated upon heme binding. Interacts with FNIP1. As to quaternary structure, interacts with TRAM2 (via C-terminus). Requires Mg(2+) as cofactor. In terms of processing, nitrated under oxidative stress. Nitration on the two tyrosine residues inhibits catalytic activity. Serotonylated on Gln residues by TGM2 in response to hypoxia, leading to its inactivation. Isoform 2 is highly expressed in heart and slow twitch skeletal muscle. Isoform 2 is widely expressed.

Its subcellular location is the endoplasmic reticulum membrane. The protein resides in the sarcoplasmic reticulum membrane. The catalysed reaction is Ca(2+)(in) + ATP + H2O = Ca(2+)(out) + ADP + phosphate + H(+). With respect to regulation, has different conformational states with differential Ca2+ affinity. The E1 conformational state (active form) shows high Ca(2+) affinity, while the E2 state exhibits low Ca(2+) affinity. Binding of ATP allosterically increases its affinity for subsequent binding of Ca2+. Reversibly inhibited by phospholamban (PLN) at low calcium concentrations. PLN inhibits ATP2A2 Ca(2+) affinity by disrupting its allosteric activation by ATP. Inhibited by sarcolipin (SLN) and myoregulin (MRLN). The inhibition is blocked by VMP1. Enhanced by STRIT1/DWORF; STRIT1 increases activity by displacing sarcolipin (SLN), phospholamban (PLN) and myoregulin (MRLN). Stabilizes SERCA2 in its E2 state. Functionally, this magnesium-dependent enzyme catalyzes the hydrolysis of ATP coupled with the translocation of calcium from the cytosol to the sarcoplasmic reticulum lumen. Involved in autophagy in response to starvation. Upon interaction with VMP1 and activation, controls ER-isolation membrane contacts for autophagosome formation. Also modulates ER contacts with lipid droplets, mitochondria and endosomes. In coordination with FLVCR2 mediates heme-stimulated switching from mitochondrial ATP synthesis to thermogenesis. Involved in the regulation of the contraction/relaxation cycle. Acts as a regulator of TNFSF11-mediated Ca(2+) signaling pathways via its interaction with TMEM64 which is critical for the TNFSF11-induced CREB1 activation and mitochondrial ROS generation necessary for proper osteoclast generation. Association between TMEM64 and SERCA2 in the ER leads to cytosolic Ca(2+) spiking for activation of NFATC1 and production of mitochondrial ROS, thereby triggering Ca(2+) signaling cascades that promote osteoclast differentiation and activation. This is Sarcoplasmic/endoplasmic reticulum calcium ATPase 2 from Mus musculus (Mouse).